A 307-amino-acid chain; its full sequence is MSRKVLLVGDGAVGSNFANDLLQTTQVDELVICDLNKDRAAGDCLDLEDMTYFTGQTKLRAGDYSDAADADVVVITAGVPRKPGESRLDLIKKNEAILRSIVDPVVASGFSGIFVVSANPVDILTTLTQKLSGFPKKRVIGTGTSLDSARLRVELAKRLQVPIESVNAWVLGEHGDSSFENFSSAVVNGKPLLDYPGMTEAALDEIEAHVREKGSEIIVKKGATYYGVAMMLAKIVTAILENNDLALPLSAPLHGEYGIKDEIYLGTLAIINGQGISHVLELPLNDSELAKMRASAATIKATLDSLG.

NAD(+) contacts are provided by residues V13, D34, R39, Y64, and 78-79 (GV). R87 serves as a coordination point for substrate. NAD(+) is bound at residue S100. Residue 119-122 (NPVD) coordinates substrate. T142 provides a ligand contact to NAD(+). 147-150 (DSAR) is a binding site for substrate. Catalysis depends on H174, which acts as the Proton acceptor. T224 contributes to the substrate binding site.

It belongs to the LDH/MDH superfamily. LDH family. As to quaternary structure, homotetramer.

It localises to the cytoplasm. It carries out the reaction (S)-lactate + NAD(+) = pyruvate + NADH + H(+). The protein operates within fermentation; pyruvate fermentation to lactate; (S)-lactate from pyruvate: step 1/1. Catalyzes the conversion of lactate to pyruvate. This Lactobacillus delbrueckii subsp. bulgaricus (strain ATCC BAA-365 / Lb-18) protein is L-lactate dehydrogenase.